Here is a 298-residue protein sequence, read N- to C-terminus: Protoheme IX farnesyltransferase (298 aa).

9 consecutive transmembrane segments (helical) span residues 28–48 (VVAL…EELV), 50–70 (LKVL…AAAI), 95–117 (LSPA…TLYA), 121–138 (PLTA…AVVY), 149–169 (NIVI…TSVT), 176–196 (AVLL…ALAV), 222–242 (CIFL…LIGM), 243–263 (TGMI…AYAW), and 274–294 (AFNM…ILLV).

The protein belongs to the UbiA prenyltransferase family. Protoheme IX farnesyltransferase subfamily.

The protein localises to the cell inner membrane. It carries out the reaction heme b + (2E,6E)-farnesyl diphosphate + H2O = Fe(II)-heme o + diphosphate. It functions in the pathway porphyrin-containing compound metabolism; heme O biosynthesis; heme O from protoheme: step 1/1. Converts heme B (protoheme IX) to heme O by substitution of the vinyl group on carbon 2 of heme B porphyrin ring with a hydroxyethyl farnesyl side group. The sequence is that of Protoheme IX farnesyltransferase from Idiomarina loihiensis (strain ATCC BAA-735 / DSM 15497 / L2-TR).